A 133-amino-acid polypeptide reads, in one-letter code: Small ribosomal subunit protein uS8 (133 aa).

Belongs to the universal ribosomal protein uS8 family. In terms of assembly, part of the 30S ribosomal subunit. Contacts proteins S5 and S12.

In terms of biological role, one of the primary rRNA binding proteins, it binds directly to 16S rRNA central domain where it helps coordinate assembly of the platform of the 30S subunit. The polypeptide is Small ribosomal subunit protein uS8 (Lachnoclostridium phytofermentans (strain ATCC 700394 / DSM 18823 / ISDg) (Clostridium phytofermentans)).